The sequence spans 540 residues: Chaperonin GroEL (540 aa).

ATP-binding positions include 29–32, 86–90, glycine 413, 476–478, and aspartate 492; these read TLGP, DGTTT, and NAA.

This sequence belongs to the chaperonin (HSP60) family. Forms a cylinder of 14 subunits composed of two heptameric rings stacked back-to-back. Interacts with the co-chaperonin GroES.

The protein resides in the cytoplasm. The enzyme catalyses ATP + H2O + a folded polypeptide = ADP + phosphate + an unfolded polypeptide.. Together with its co-chaperonin GroES, plays an essential role in assisting protein folding. The GroEL-GroES system forms a nano-cage that allows encapsulation of the non-native substrate proteins and provides a physical environment optimized to promote and accelerate protein folding. The chain is Chaperonin GroEL from Streptococcus agalactiae.